The chain runs to 217 residues: Uracil-DNA glycosylase (217 aa).

The active-site Proton acceptor is aspartate 62.

This sequence belongs to the uracil-DNA glycosylase (UDG) superfamily. UNG family.

It is found in the cytoplasm. It carries out the reaction Hydrolyzes single-stranded DNA or mismatched double-stranded DNA and polynucleotides, releasing free uracil.. Its function is as follows. Excises uracil residues from the DNA which can arise as a result of misincorporation of dUMP residues by DNA polymerase or due to deamination of cytosine. The chain is Uracil-DNA glycosylase from Streptococcus pyogenes serotype M18 (strain MGAS8232).